A 384-amino-acid chain; its full sequence is N-acetyldiaminopimelate deacetylase (384 aa).

Aspartate 74 is a catalytic residue. Glutamate 133 (proton acceptor) is an active-site residue.

The protein belongs to the peptidase M20A family. N-acetyldiaminopimelate deacetylase subfamily.

The enzyme catalyses N-acetyl-(2S,6S)-2,6-diaminopimelate + H2O = (2S,6S)-2,6-diaminopimelate + acetate. It functions in the pathway amino-acid biosynthesis; L-lysine biosynthesis via DAP pathway; LL-2,6-diaminopimelate from (S)-tetrahydrodipicolinate (acetylase route): step 3/3. Catalyzes the conversion of N-acetyl-diaminopimelate to diaminopimelate and acetate. This chain is N-acetyldiaminopimelate deacetylase, found in Leuconostoc mesenteroides subsp. mesenteroides (strain ATCC 8293 / DSM 20343 / BCRC 11652 / CCM 1803 / JCM 6124 / NCDO 523 / NBRC 100496 / NCIMB 8023 / NCTC 12954 / NRRL B-1118 / 37Y).